Here is a 257-residue protein sequence, read N- to C-terminus: Type III pantothenate kinase (257 aa).

Residue 6-13 (DVGNTNTV) participates in ATP binding. Substrate-binding positions include Tyr-100 and 107–110 (GADR). Residue Asp-109 is the Proton acceptor of the active site. Asp-129 is a binding site for K(+). Position 132 (Thr-132) interacts with ATP. Residue Thr-185 participates in substrate binding.

Belongs to the type III pantothenate kinase family. As to quaternary structure, homodimer. NH4(+) is required as a cofactor. It depends on K(+) as a cofactor.

It is found in the cytoplasm. The enzyme catalyses (R)-pantothenate + ATP = (R)-4'-phosphopantothenate + ADP + H(+). Its pathway is cofactor biosynthesis; coenzyme A biosynthesis; CoA from (R)-pantothenate: step 1/5. Catalyzes the phosphorylation of pantothenate (Pan), the first step in CoA biosynthesis. The sequence is that of Type III pantothenate kinase from Desulfatibacillum aliphaticivorans.